The chain runs to 88 residues: Phosphocarrier protein HPr (88 aa).

An HPr domain is found at methionine 1–isoleucine 88. The active-site Pros-phosphohistidine intermediate is histidine 15. Serine 47 carries the post-translational modification Phosphoserine; by HPrK/P.

Belongs to the HPr family.

The protein localises to the cytoplasm. Phosphorylation on Ser-47 inhibits the phosphoryl transfer from enzyme I to HPr. General (non sugar-specific) component of the phosphoenolpyruvate-dependent sugar phosphotransferase system (sugar PTS). This major carbohydrate active-transport system catalyzes the phosphorylation of incoming sugar substrates concomitantly with their translocation across the cell membrane. The phosphoryl group from phosphoenolpyruvate (PEP) is transferred to the phosphoryl carrier protein HPr by enzyme I. Phospho-HPr then transfers it to the PTS EIIA domain. Its function is as follows. P-Ser-HPr interacts with the catabolite control protein A (CcpA), forming a complex that binds to DNA at the catabolite response elements cre, operator sites preceding a large number of catabolite-regulated genes. Thus, P-Ser-HPr is a corepressor in carbon catabolite repression (CCR), a mechanism that allows bacteria to coordinate and optimize the utilization of available carbon sources. P-Ser-HPr also plays a role in inducer exclusion, in which it probably interacts with several non-PTS permeases and inhibits their transport activity. The protein is Phosphocarrier protein HPr (ptsH) of Mycoplasma pneumoniae (strain ATCC 29342 / M129 / Subtype 1) (Mycoplasmoides pneumoniae).